The primary structure comprises 618 residues: UvrABC system protein C (618 aa).

The region spanning 13-92 (DKPGVYLMKN…IKKYRPKYNI (80 aa)) is the GIY-YIG domain. The 36-residue stretch at 204–239 (LDIVENFKLNMERAAENLEFEKAAMLRDKINIIEKI) folds into the UVR domain.

This sequence belongs to the UvrC family. In terms of assembly, interacts with UvrB in an incision complex.

It is found in the cytoplasm. Its function is as follows. The UvrABC repair system catalyzes the recognition and processing of DNA lesions. UvrC both incises the 5' and 3' sides of the lesion. The N-terminal half is responsible for the 3' incision and the C-terminal half is responsible for the 5' incision. The chain is UvrABC system protein C from Clostridium botulinum (strain Langeland / NCTC 10281 / Type F).